A 444-amino-acid chain; its full sequence is L-cysteine:1D-myo-inositol 2-amino-2-deoxy-alpha-D-glucopyranoside ligase (444 aa).

Residues 1–13 (MPCDRKTSPDQHH) are compositionally biased toward basic and acidic residues. The interval 1 to 21 (MPCDRKTSPDQHHALQIHRHH) is disordered. Position 75 (C75) interacts with Zn(2+). Residues 75–78 (CGIT), T90, and 113–115 (NIT) each bind L-cysteinyl-5'-AMP. A 'HIGH' region motif is present at residues 77 to 87 (ITPYDATHLGH). Positions 219–224 (ERGGDP) match the 'ERGGDP' region motif. W259 serves as a coordination point for L-cysteinyl-5'-AMP. Residue C263 participates in Zn(2+) binding. 281–283 (GSD) serves as a coordination point for L-cysteinyl-5'-AMP. Position 288 (H288) interacts with Zn(2+). L-cysteinyl-5'-AMP is bound at residue I315. Positions 321-325 (KMSKS) match the 'KMSKS' region motif.

Belongs to the class-I aminoacyl-tRNA synthetase family. MshC subfamily. In terms of assembly, monomer. Zn(2+) serves as cofactor.

The enzyme catalyses 1D-myo-inositol 2-amino-2-deoxy-alpha-D-glucopyranoside + L-cysteine + ATP = 1D-myo-inositol 2-(L-cysteinylamino)-2-deoxy-alpha-D-glucopyranoside + AMP + diphosphate + H(+). Functionally, catalyzes the ATP-dependent condensation of GlcN-Ins and L-cysteine to form L-Cys-GlcN-Ins. In Mycolicibacterium gilvum (strain PYR-GCK) (Mycobacterium gilvum (strain PYR-GCK)), this protein is L-cysteine:1D-myo-inositol 2-amino-2-deoxy-alpha-D-glucopyranoside ligase.